A 138-amino-acid chain; its full sequence is Large ribosomal subunit protein uL16 (138 aa).

The span at methionine 1–glutamine 13 shows a compositional bias: basic residues. Positions methionine 1–threonine 22 are disordered.

Belongs to the universal ribosomal protein uL16 family. Part of the 50S ribosomal subunit.

Functionally, binds 23S rRNA and is also seen to make contacts with the A and possibly P site tRNAs. The protein is Large ribosomal subunit protein uL16 of Acidovorax ebreus (strain TPSY) (Diaphorobacter sp. (strain TPSY)).